Here is a 658-residue protein sequence, read N- to C-terminus: Cysteine-rich receptor-like protein kinase 14 (658 aa).

Residues 1–22 (MELKNLFPIFWFVLVGFAVVSA) form the signal peptide. 2 consecutive Gnk2-homologous domains span residues 23-125 (QECG…NSSF) and 131-240 (AEPH…LFPF). Topologically, residues 23–277 (QECGKTGFFV…ATKKGSITIS (255 aa)) are extracellular. Asparagine 51, asparagine 60, asparagine 102, asparagine 122, and asparagine 146 each carry an N-linked (GlcNAc...) asparagine glycan. The chain crosses the membrane as a helical span at residues 278-298 (IGIVWAIIIPTVIVVFLVLLA). Residues 299-658 (LGFVVYRRRK…DVTITDFEPR (360 aa)) are Cytoplasmic-facing. A Protein kinase domain is found at 337 to 614 (FSESNIIGRG…NMMLINNSYV (278 aa)). ATP contacts are provided by residues 343–351 (IGRGGFGEV) and lysine 364. A Phosphotyrosine modification is found at tyrosine 409. Aspartate 461 serves as the catalytic Proton acceptor. A Phosphoserine modification is found at serine 465. At threonine 501 the chain carries Phosphothreonine. The residue at position 509 (tyrosine 509) is a Phosphotyrosine.

The protein belongs to the protein kinase superfamily. Ser/Thr protein kinase family. CRK subfamily.

The protein localises to the membrane. The enzyme catalyses L-seryl-[protein] + ATP = O-phospho-L-seryl-[protein] + ADP + H(+). It carries out the reaction L-threonyl-[protein] + ATP = O-phospho-L-threonyl-[protein] + ADP + H(+). This is Cysteine-rich receptor-like protein kinase 14 (CRK14) from Arabidopsis thaliana (Mouse-ear cress).